The chain runs to 299 residues: Recombination-associated protein RdgC (299 aa).

It belongs to the RdgC family.

It localises to the cytoplasm. The protein resides in the nucleoid. May be involved in recombination. The polypeptide is Recombination-associated protein RdgC (Bordetella bronchiseptica (strain ATCC BAA-588 / NCTC 13252 / RB50) (Alcaligenes bronchisepticus)).